A 700-amino-acid polypeptide reads, in one-letter code: DNA ligase (700 aa).

NAD(+)-binding positions include 61-65, 110-111, and Glu-141; these read DAEYD and SL. The active-site N6-AMP-lysine intermediate is the Lys-143. The NAD(+) site is built by Arg-164, Glu-202, Lys-321, and Lys-345. Zn(2+)-binding residues include Cys-439, Cys-442, Cys-457, and Cys-462. The BRCT domain maps to 619–700; the sequence is AVSNKLAGLQ…EFLRLLEDSK (82 aa).

Belongs to the NAD-dependent DNA ligase family. LigA subfamily. It depends on Mg(2+) as a cofactor. The cofactor is Mn(2+).

It carries out the reaction NAD(+) + (deoxyribonucleotide)n-3'-hydroxyl + 5'-phospho-(deoxyribonucleotide)m = (deoxyribonucleotide)n+m + AMP + beta-nicotinamide D-nucleotide.. Functionally, DNA ligase that catalyzes the formation of phosphodiester linkages between 5'-phosphoryl and 3'-hydroxyl groups in double-stranded DNA using NAD as a coenzyme and as the energy source for the reaction. It is essential for DNA replication and repair of damaged DNA. This chain is DNA ligase, found in Hydrogenobaculum sp. (strain Y04AAS1).